The primary structure comprises 144 residues: Transcription antitermination protein NusB (144 aa).

It belongs to the NusB family.

In terms of biological role, involved in transcription antitermination. Required for transcription of ribosomal RNA (rRNA) genes. Binds specifically to the boxA antiterminator sequence of the ribosomal RNA (rrn) operons. The protein is Transcription antitermination protein NusB of Leifsonia xyli subsp. xyli (strain CTCB07).